A 507-amino-acid polypeptide reads, in one-letter code: Cytochrome P450 71A4 (507 aa).

Residues 3–23 form a helical membrane-spanning segment; that stretch reads VPCLWYSLLILLLLFIFLLIH. C448 contributes to the heme binding site.

This sequence belongs to the cytochrome P450 family. Heme serves as cofactor.

It localises to the membrane. May have a role in maturation, such as during flavor formation or other metabolite production specific to aging tissues. This is Cytochrome P450 71A4 (CYP71A4) from Solanum melongena (Eggplant).